The following is a 490-amino-acid chain: ATP synthase subunit beta, chloroplastic (490 aa).

ATP is bound at residue glycine 170–threonine 177.

Belongs to the ATPase alpha/beta chains family. As to quaternary structure, F-type ATPases have 2 components, CF(1) - the catalytic core - and CF(0) - the membrane proton channel. CF(1) has five subunits: alpha(3), beta(3), gamma(1), delta(1), epsilon(1). CF(0) has four main subunits: a(1), b(1), b'(1) and c(9-12).

Its subcellular location is the plastid. The protein resides in the chloroplast thylakoid membrane. It catalyses the reaction ATP + H2O + 4 H(+)(in) = ADP + phosphate + 5 H(+)(out). Functionally, produces ATP from ADP in the presence of a proton gradient across the membrane. The catalytic sites are hosted primarily by the beta subunits. This Ipomoea obscura (Obscure morning glory) protein is ATP synthase subunit beta, chloroplastic.